Reading from the N-terminus, the 2134-residue chain is Genome polyprotein (2134 aa).

Topologically, residues 1-1377 are cytoplasmic; it reads MSKLFSTVGK…WLFEKIKTSK (1377 aa). The LRAT domain maps to 781 to 882; that stretch reads IVSCSGEKAK…GDYGTKEGEK (102 aa). Residues His-791 and His-802 contribute to the active site. Cys-863 acts as the Acyl-thioester intermediate in catalysis. Positions 1127 to 1289 constitute an SF3 helicase domain; the sequence is LNKLGRLDKP…EEFSTHAMLD (163 aa). Residue 1153 to 1160 participates in ATP binding; that stretch reads GNRGGGKS. The stretch at 1378–1392 is an intramembrane region; sequence WYILGCVGAVLSVSV. Residues 1393–2134 are Cytoplasmic-facing; the sequence is LGVFAYHMIK…VKYRFIDDSF (742 aa). Tyr-1415 bears the O-(5'-phospho-RNA)-tyrosine mark. In terms of domain architecture, Peptidase C3 spans 1431–1643; it reads DAQSVVDISN…ITKEMIEEML (213 aa). Active-site for protease 3C activity residues include His-1477, Asp-1515, and Cys-1603. A RdRp catalytic domain is found at 1880–2001; sequence DLVVGLDFSN…CIKKEYLDQK (122 aa).

This sequence belongs to the picornaviridae polyprotein family. Specific enzymatic cleavages by the viral protease in vivo yield a variety of precursors and mature proteins. During virion maturation, non-infectious particles are rendered infectious following cleavage of VP0. This maturation cleavage is followed by a conformational change of the particle. Post-translationally, VPg is uridylylated by the polymerase and is covalently linked to the 5'-end of genomic RNA. This uridylylated form acts as a nucleotide-peptide primer for the polymerase.

The protein localises to the virion. The protein resides in the host cytoplasm. It is found in the host cytoplasmic vesicle membrane. The catalysed reaction is RNA(n) + a ribonucleoside 5'-triphosphate = RNA(n+1) + diphosphate. The enzyme catalyses a ribonucleoside 5'-triphosphate + H2O = a ribonucleoside 5'-diphosphate + phosphate + H(+). It catalyses the reaction Selective cleavage of Gln-|-Gly bond in the poliovirus polyprotein. In other picornavirus reactions Glu may be substituted for Gln, and Ser or Thr for Gly.. In terms of biological role, capsid proteins VP1, VP2, and VP3 form a closed capsid enclosing the viral positive strand RNA genome. All these proteins contain a beta-sheet structure called beta-barrel jelly roll. Together they form an icosahedral capsid (T=3) composed of 60 copies of each VP1, VP2, and VP3, with a diameter of approximately 300 Angstroms. VP1 is situated at the 12 fivefold axes, whereas VP2 and VP3 are located at the quasi-sixfold axes. Its function is as follows. VP0 precursor is a component of immature procapsids. The N-terminal domain of VP0, protein VP4, is needed for the assembly of 12 pentamers into the icosahedral structure. Unlike other picornaviruses, AEV VP4 may not be myristoylated. Functionally, protein 2B and 2BC precursor affect membrane integrity and cause an increase in membrane permeability. Associates with and induces structural rearrangements of intracellular membranes. It displays RNA-binding, nucleotide binding and NTPase activities. In terms of biological role, protein 3A, via its hydrophobic domain, serves as membrane anchor. Its function is as follows. Protein 3B is covalently linked to the 5'-end of both the positive-strand and negative-strand genomic RNAs. It acts as a genome-linked replication primer. Functionally, cysteine protease that generates mature viral proteins from the precursor polyprotein. In addition to its proteolytic activity, it binds to viral RNA, and thus influences viral genome replication. RNA and substrate bind cooperatively to the protease. RNA-directed RNA polymerase 3D-POL replicates genomic and antigenomic RNA by recognizing replications specific signals. The protein is Genome polyprotein of Avian encephalomyelitis virus (strain Calnek vaccine) (AEV).